A 274-amino-acid polypeptide reads, in one-letter code: Orotidine 5'-phosphate decarboxylase (274 aa).

Substrate is bound by residues Asp40, 62–64 (KTH), 93–102 (DRKFVDIGNT), Tyr227, and Arg245. Lys95 acts as the Proton donor in catalysis.

This sequence belongs to the OMP decarboxylase family.

The catalysed reaction is orotidine 5'-phosphate + H(+) = UMP + CO2. It functions in the pathway pyrimidine metabolism; UMP biosynthesis via de novo pathway; UMP from orotate: step 2/2. This chain is Orotidine 5'-phosphate decarboxylase (URA3), found in Coccidioides posadasii (strain RMSCC 757 / Silveira) (Valley fever fungus).